The primary structure comprises 399 residues: Type II secretion system protein L (399 aa).

Residues 1-247 (MSKAENTSGK…VKPWKQALLP (247 aa)) are Cytoplasmic-facing. Residues 248–264 (WRNVLIALSAWLLLVLG) form a helical membrane-spanning segment. Topologically, residues 265–399 (ESVWTHYQWY…EGQLTLRSQP (135 aa)) are periplasmic.

It belongs to the GSP L family. Type II secretion system is composed of four main components: the outer membrane complex, the inner membrane complex, the cytoplasmic secretion ATPase and the periplasm-spanning pseudopilus. Forms homodimers. Interacts with OutM/GspM. Interacts with OutE/GspE and OutF/GspF.

The protein localises to the cell inner membrane. Its function is as follows. Inner membrane component of the type II secretion system required for the energy-dependent secretion of extracellular factors such as proteases and toxins from the periplasm. Plays a role in the complex assembly and recruits OutM resulting in a stable complex in the inner membrane. Provides thus a link between the energy-providing OutE protein in the cytoplasm and the rest of the T2SS machinery. The polypeptide is Type II secretion system protein L (outL) (Dickeya chrysanthemi (Pectobacterium chrysanthemi)).